We begin with the raw amino-acid sequence, 201 residues long: ATP-dependent Clp protease proteolytic subunit (201 aa).

The active-site Nucleophile is the Ser-97. His-122 is an active-site residue.

It belongs to the peptidase S14 family. Fourteen ClpP subunits assemble into 2 heptameric rings which stack back to back to give a disk-like structure with a central cavity, resembling the structure of eukaryotic proteasomes.

The protein resides in the cytoplasm. It carries out the reaction Hydrolysis of proteins to small peptides in the presence of ATP and magnesium. alpha-casein is the usual test substrate. In the absence of ATP, only oligopeptides shorter than five residues are hydrolyzed (such as succinyl-Leu-Tyr-|-NHMec, and Leu-Tyr-Leu-|-Tyr-Trp, in which cleavage of the -Tyr-|-Leu- and -Tyr-|-Trp bonds also occurs).. In terms of biological role, cleaves peptides in various proteins in a process that requires ATP hydrolysis. Has a chymotrypsin-like activity. Plays a major role in the degradation of misfolded proteins. The sequence is that of ATP-dependent Clp protease proteolytic subunit from Nitratidesulfovibrio vulgaris (strain ATCC 29579 / DSM 644 / CCUG 34227 / NCIMB 8303 / VKM B-1760 / Hildenborough) (Desulfovibrio vulgaris).